The sequence spans 115 residues: Large ribosomal subunit protein bL20c (115 aa).

This sequence belongs to the bacterial ribosomal protein bL20 family.

The protein localises to the plastid. It is found in the chloroplast. Functionally, binds directly to 23S ribosomal RNA and is necessary for the in vitro assembly process of the 50S ribosomal subunit. It is not involved in the protein synthesizing functions of that subunit. The polypeptide is Large ribosomal subunit protein bL20c (Emiliania huxleyi (Coccolithophore)).